The sequence spans 208 residues: Protein-L-isoaspartate O-methyltransferase (208 aa).

Residue Ser59 is part of the active site.

The protein belongs to the methyltransferase superfamily. L-isoaspartyl/D-aspartyl protein methyltransferase family.

It is found in the cytoplasm. It catalyses the reaction [protein]-L-isoaspartate + S-adenosyl-L-methionine = [protein]-L-isoaspartate alpha-methyl ester + S-adenosyl-L-homocysteine. Catalyzes the methyl esterification of L-isoaspartyl residues in peptides and proteins that result from spontaneous decomposition of normal L-aspartyl and L-asparaginyl residues. It plays a role in the repair and/or degradation of damaged proteins. This is Protein-L-isoaspartate O-methyltransferase from Aliivibrio fischeri (strain ATCC 700601 / ES114) (Vibrio fischeri).